The sequence spans 115 residues: Large ribosomal subunit protein bL19 (115 aa).

It belongs to the bacterial ribosomal protein bL19 family.

In terms of biological role, this protein is located at the 30S-50S ribosomal subunit interface and may play a role in the structure and function of the aminoacyl-tRNA binding site. This is Large ribosomal subunit protein bL19 from Sodalis glossinidius (strain morsitans).